The following is a 185-amino-acid chain: Biogenesis of lysosome-related organelles complex 1 subunit 5 (185 aa).

The interval 1-25 is disordered; the sequence is MSGGGTETPVACDAAQGGKKRDSLG. Ser-2 carries the N-acetylserine modification.

The protein belongs to the BLOC1S5 family. In terms of assembly, octamer composed of one copy each BLOC1S1, BLOC1S2, BLOC1S3, BLOC1S4, BLOC1S5, BLOC1S6, DTNBP1/BLOC1S7 and SNAPIN/BLOC1S8. Component of the biogenesis of lysosome-related organelles complex 1 (BLOC-1) composed of BLOC1S1, BLOC1S2, BLOC1S3, BLOC1S4, BLOC1S5, BLOC1S6, DTNBP1/BLOC1S7 and SNAPIN/BLOC1S8. The BLOC-1 complex associates with the AP-3 protein complex and membrane protein cargos. Interacts with BLOC1S4, BLOC1S6, DTNBP1/BLOC1S7 and PI4K2A. In terms of tissue distribution, detected in heart, brain, spleen, lung, kidney and testis.

In terms of biological role, component of the BLOC-1 complex, a complex that is required for normal biogenesis of lysosome-related organelles (LRO), such as platelet dense granules and melanosomes. In concert with the AP-3 complex, the BLOC-1 complex is required to target membrane protein cargos into vesicles assembled at cell bodies for delivery into neurites and nerve terminals. The BLOC-1 complex, in association with SNARE proteins, is also proposed to be involved in neurite extension. Plays a role in intracellular vesicle trafficking. This is Biogenesis of lysosome-related organelles complex 1 subunit 5 (Bloc1s5) from Mus musculus (Mouse).